Here is a 633-residue protein sequence, read N- to C-terminus: Biosynthetic arginine decarboxylase (633 aa).

Residue Lys101 is modified to N6-(pyridoxal phosphate)lysine. Position 284–294 (284–294 (VDVGGGLGVDY)) interacts with substrate.

This sequence belongs to the Orn/Lys/Arg decarboxylase class-II family. SpeA subfamily. Requires Mg(2+) as cofactor. The cofactor is pyridoxal 5'-phosphate.

The enzyme catalyses L-arginine + H(+) = agmatine + CO2. It functions in the pathway amine and polyamine biosynthesis; agmatine biosynthesis; agmatine from L-arginine: step 1/1. Its function is as follows. Catalyzes the biosynthesis of agmatine from arginine. This chain is Biosynthetic arginine decarboxylase, found in Aeromonas salmonicida (strain A449).